A 413-amino-acid polypeptide reads, in one-letter code: Mitochondrial inner membrane magnesium transporter MFM1 (413 aa).

The transit peptide at 1 to 35 (MRAFPRVLPFRHQRSYNNILLRTVRLFGSSLSSFD) directs the protein to the mitochondrion. An N-linked (GlcNAc...) asparagine glycan is attached at asparagine 202. A helical transmembrane segment spans residues 329–349 (LMLLGIRYAIGMLSLGGALFL). A YGMN motif is present at residues 353-356 (YGMN). The chain crosses the membrane as a helical span at residues 367-387 (AYLTVTILGLISTVWLYAKGI).

It belongs to the CorA metal ion transporter (MIT) (TC 1.A.35) family. As to quaternary structure, forms homooligomers. Interacts with MRS2. In terms of processing, N-glycosylated. Glycosylation is important for correct localization of the protein.

Its subcellular location is the mitochondrion inner membrane. Mitochondrial inner membrane magnesium transporter required for mitochondrial magnesium homeostasis. Modulates the conductance of the MRS2 channel. Involved in the splicing of mRNA group II introns in mitochondria by affecting mitochondrial magnesium concentrations, which are critical for group II intron splicing. The sequence is that of Mitochondrial inner membrane magnesium transporter MFM1 (MFM1) from Saccharomyces cerevisiae (strain ATCC 204508 / S288c) (Baker's yeast).